The primary structure comprises 326 residues: Tetraacyldisaccharide 4'-kinase (326 aa).

Position 58 to 65 (serine 58 to threonine 65) interacts with ATP.

The protein belongs to the LpxK family.

The enzyme catalyses a lipid A disaccharide + ATP = a lipid IVA + ADP + H(+). Its pathway is glycolipid biosynthesis; lipid IV(A) biosynthesis; lipid IV(A) from (3R)-3-hydroxytetradecanoyl-[acyl-carrier-protein] and UDP-N-acetyl-alpha-D-glucosamine: step 6/6. In terms of biological role, transfers the gamma-phosphate of ATP to the 4'-position of a tetraacyldisaccharide 1-phosphate intermediate (termed DS-1-P) to form tetraacyldisaccharide 1,4'-bis-phosphate (lipid IVA). The sequence is that of Tetraacyldisaccharide 4'-kinase from Pseudoalteromonas translucida (strain TAC 125).